Here is a 390-residue protein sequence, read N- to C-terminus: Multidrug export protein EmrA (390 aa).

Over 1–24 (MSANAETQTPQQPVKKSGKRKRLL) the chain is Cytoplasmic. The chain crosses the membrane as a helical span at residues 25 to 45 (LLLTLLFIIIAVAIGIYWFLV). The Periplasmic segment spans residues 46-390 (LRHFEETDDA…IDDIVKANAG (345 aa)). Residues 120–180 (INSKQLQANI…QAQLDVAIQQ (61 aa)) adopt a coiled-coil conformation.

Belongs to the membrane fusion protein (MFP) (TC 8.A.1) family. Homodimer and homotrimer. Part of the tripartite efflux system EmrAB-TolC, which is composed of an inner membrane transporter, EmrB, a periplasmic membrane fusion protein, EmrA, and an outer membrane component, TolC. The complex forms a large protein conduit and can translocate molecules across both the inner and outer membranes. Interacts with EmrB. EmrAB complex forms a dimer in vitro.

Its subcellular location is the cell inner membrane. Functionally, part of the tripartite efflux system EmrAB-TolC, which confers resistance to antibiotics such as CCCP, FCCP, 2,4-dinitrophenol and nalidixic acid. EmrA is a drug-binding protein that provides a physical link between EmrB and TolC. This Escherichia coli (strain K12) protein is Multidrug export protein EmrA (emrA).